Here is a 379-residue protein sequence, read N- to C-terminus: Succinyl-diaminopimelate desuccinylase (379 aa).

Position 68 (His-68) interacts with Zn(2+). Asp-70 is a catalytic residue. A Zn(2+)-binding site is contributed by Asp-101. Glu-135 acts as the Proton acceptor in catalysis. Residues Glu-136, Glu-164, and His-350 each contribute to the Zn(2+) site.

The protein belongs to the peptidase M20A family. DapE subfamily. As to quaternary structure, homodimer. Zn(2+) serves as cofactor. Requires Co(2+) as cofactor.

It carries out the reaction N-succinyl-(2S,6S)-2,6-diaminopimelate + H2O = (2S,6S)-2,6-diaminopimelate + succinate. It participates in amino-acid biosynthesis; L-lysine biosynthesis via DAP pathway; LL-2,6-diaminopimelate from (S)-tetrahydrodipicolinate (succinylase route): step 3/3. Its function is as follows. Catalyzes the hydrolysis of N-succinyl-L,L-diaminopimelic acid (SDAP), forming succinate and LL-2,6-diaminopimelate (DAP), an intermediate involved in the bacterial biosynthesis of lysine and meso-diaminopimelic acid, an essential component of bacterial cell walls. This is Succinyl-diaminopimelate desuccinylase from Bordetella parapertussis (strain 12822 / ATCC BAA-587 / NCTC 13253).